A 248-amino-acid polypeptide reads, in one-letter code: MLKHPTLNLLQQLGLAGMADAFTRLADNDESDNLSHGEWLALLLDQEATWRNNKRLALRLRNAKLHHPAVPEDIIRRAPREYDRTILDLLIAGDWIRKHENCAIVGPTGIGKSWLACALGHKACRDNHSVLYVRMPALLQSLEQARGIGSLATRLKSLGAVELLILDDYGLQPIDGNAPHYLLEILEGRYGRRSTLVTSQFPVARWHEKISDPTYADAILDRLVHNAHRLEMSGESMRRLRQPAEIQT.

An ATP-binding site is contributed by 106–113 (GPTGIGKS).

The protein belongs to the IS21/IS1162 putative ATP-binding protein family.

The chain is Putative insertion sequence ATP-binding protein y4uH from Sinorhizobium fredii (strain NBRC 101917 / NGR234).